The following is an 856-amino-acid chain: FO synthase (856 aa).

2 Radical SAM core domains span residues 84 to 336 (ISYS…APPN) and 544 to 785 (VTFV…SHIQ). Residues 85 to 417 (SYSRKVFIPV…PRVRGHVVAL (333 aa)) form a cofG-like region. [4Fe-4S] cluster is bound by residues C98, C102, C105, C558, C562, and C565. The segment at 521-854 (DGPALEAVAA…RQRTTTYALL (334 aa)) is cofH-like.

It in the N-terminal section; belongs to the radical SAM superfamily. CofG family. The protein in the C-terminal section; belongs to the radical SAM superfamily. CofH family. Requires [4Fe-4S] cluster as cofactor.

The enzyme catalyses 5-amino-6-(D-ribitylamino)uracil + L-tyrosine + S-adenosyl-L-methionine = 5-amino-5-(4-hydroxybenzyl)-6-(D-ribitylimino)-5,6-dihydrouracil + 2-iminoacetate + 5'-deoxyadenosine + L-methionine + H(+). It catalyses the reaction 5-amino-5-(4-hydroxybenzyl)-6-(D-ribitylimino)-5,6-dihydrouracil + S-adenosyl-L-methionine = 7,8-didemethyl-8-hydroxy-5-deazariboflavin + 5'-deoxyadenosine + L-methionine + NH4(+) + H(+). The protein operates within cofactor biosynthesis; coenzyme F0 biosynthesis. In terms of biological role, catalyzes the radical-mediated synthesis of 7,8-didemethyl-8-hydroxy-5-deazariboflavin (FO) from 5-amino-6-(D-ribitylamino)uracil and L-tyrosine. The chain is FO synthase (fbiC) from Mycobacterium bovis (strain ATCC BAA-935 / AF2122/97).